The following is a 347-amino-acid chain: MLFPPGIFSEATAFSHKRSIRSISSHSTFDDVTAETDEAPVLAEVEKMPAVVKKVKHGMRKVLESLGILDSKCEQKKKHNKIPSAAAGDSPIKTFGYPFYDTSLGRSLLRPQVGLSFIEGFMQPIKVGAFDWMVQGTVDDVLSFLVCFDDYEAIAEKLGEDGAWHSEGNIGPLYLQLQNTSQYQGDASSILMAYSVEQILGRIDAWGVIDQTIGHWWKPAASLSEKAKSVYDTYQSLKERVPDLTTEKFQEVWNSASTKSGVGKLKELAKLFTLNPETRDLRDSWENLDRVDRGRKISLYVTSYPKRSRTMATFAFGENRVKLGDMAAAVAAATKDTTLDNLLKKYL.

It is found in the cytoplasmic vesicle. The protein localises to the secretory vesicle. It localises to the microneme. The protein resides in the secreted. This Toxoplasma gondii protein is Microneme protein 21.